The primary structure comprises 476 residues: FAD-dependent monooxygenase prhF (476 aa).

The FAD site is built by Glu-41, Gly-55, and Arg-114. Residue Tyr-222 is part of the active site. FAD-binding residues include Asp-314 and Ala-327. Asn-343 carries an N-linked (GlcNAc...) asparagine glycan. The chain crosses the membrane as a helical span at residues 447 to 467 (LGSTPIQMLTLLLPCLFYFMY). Asn-471 is a glycosylation site (N-linked (GlcNAc...) asparagine).

Belongs to the paxM FAD-dependent monooxygenase family. FAD is required as a cofactor.

It is found in the membrane. The protein operates within secondary metabolite biosynthesis; terpenoid biosynthesis. In terms of biological role, FAD-dependent monooxygenase; part of the gene cluster that mediates the biosynthesis of paraherquonin, a meroterpenoid with a unique, highly congested hexacyclic molecular architecture. The first step of the pathway is the synthesis of 3,5-dimethylorsellinic acid (DMOA) by the polyketide synthase prhL. Synthesis of DMOA is followed by farnesylation by the prenyltransferase prhE, methylesterification by the methyl-transferase prhM, epoxidation of the prenyl chain by the flavin-dependent monooxygenase prhF, and cyclization of the farnesyl moiety by the terpene cyclase prhH, to yield the tetracyclic intermediate, protoaustinoid A. The short chain dehydrogenase prhI then oxidizes the C-3 alcohol group of the terpene cyclase product to transform protoaustinoid A into protoaustinoid B. The FAD-binding monooxygenase prhJ catalyzes the oxidation of protoaustinoid B into preaustinoid A which is further oxidized into preaustinoid A1 by FAD-binding monooxygenase phrK. Finally, prhA leads to berkeleydione via the berkeleyone B intermediate. PrhA is a multifunctional dioxygenase that first desaturates at C5-C6 to form berkeleyone B, followed by rearrangement of the A/B-ring to form the cycloheptadiene moiety in berkeleydione. Berkeleydione serves as the key intermediate for the biosynthesis of paraherquonin as well as many other meroterpenoids. The cytochrome P450 monooxygenases prhB, prhD, and prhN, as well as the isomerase prhC, are probably involved in the late stage of paraherquonin biosynthesis, after the production of berkeleydione. Especially prhC might be a multifunctional enzyme that catalyzes the D-ring expansion via intramolecular methoxy rearrangement, as well as the hydrolysis of the expanded D-ring. In Penicillium brasilianum, this protein is FAD-dependent monooxygenase prhF.